The primary structure comprises 100 residues: NADH-quinone oxidoreductase subunit K (100 aa).

The next 3 membrane-spanning stretches (helical) occupy residues 4–24 (LFHG…SLIV), 28–48 (ILFM…ALVV), and 60–80 (IMYI…LALL).

This sequence belongs to the complex I subunit 4L family. NDH-1 is composed of 13 different subunits. Subunits NuoA, H, J, K, L, M, N constitute the membrane sector of the complex.

The protein resides in the cell membrane. The catalysed reaction is a quinone + NADH + 5 H(+)(in) = a quinol + NAD(+) + 4 H(+)(out). NDH-1 shuttles electrons from NADH, via FMN and iron-sulfur (Fe-S) centers, to quinones in the respiratory chain. The immediate electron acceptor for the enzyme in this species is believed to be ubiquinone. Couples the redox reaction to proton translocation (for every two electrons transferred, four hydrogen ions are translocated across the cytoplasmic membrane), and thus conserves the redox energy in a proton gradient. This is NADH-quinone oxidoreductase subunit K from Buchnera aphidicola subsp. Schizaphis graminum (strain Sg).